We begin with the raw amino-acid sequence, 162 residues long: NADH-quinone oxidoreductase subunit I (162 aa).

2 4Fe-4S ferredoxin-type domains span residues 54–83 and 93–122; these read RRYENGEERCIACKLCEAVCPALAITIESE and TRYDIDLTKCIFCGFCEESCPVDSIVETQI. Positions 63, 66, 69, 73, 102, 105, 108, and 112 each coordinate [4Fe-4S] cluster.

The protein belongs to the complex I 23 kDa subunit family. In terms of assembly, NDH-1 is composed of 14 different subunits. Subunits NuoA, H, J, K, L, M, N constitute the membrane sector of the complex. It depends on [4Fe-4S] cluster as a cofactor.

Its subcellular location is the cell inner membrane. It catalyses the reaction a quinone + NADH + 5 H(+)(in) = a quinol + NAD(+) + 4 H(+)(out). NDH-1 shuttles electrons from NADH, via FMN and iron-sulfur (Fe-S) centers, to quinones in the respiratory chain. The immediate electron acceptor for the enzyme in this species is believed to be ubiquinone. Couples the redox reaction to proton translocation (for every two electrons transferred, four hydrogen ions are translocated across the cytoplasmic membrane), and thus conserves the redox energy in a proton gradient. In Burkholderia mallei (strain NCTC 10247), this protein is NADH-quinone oxidoreductase subunit I.